The following is a 584-amino-acid chain: 2-succinyl-5-enolpyruvyl-6-hydroxy-3-cyclohexene-1-carboxylate synthase (584 aa).

The tract at residues 563-584 is disordered; sequence TDAEASHRERERLADRVTGLSV. Positions 566-577 are enriched in basic and acidic residues; sequence EASHRERERLAD.

It belongs to the TPP enzyme family. MenD subfamily. Homodimer. Requires Mg(2+) as cofactor. Mn(2+) serves as cofactor. The cofactor is thiamine diphosphate.

It carries out the reaction isochorismate + 2-oxoglutarate + H(+) = 5-enolpyruvoyl-6-hydroxy-2-succinyl-cyclohex-3-ene-1-carboxylate + CO2. Its pathway is quinol/quinone metabolism; 1,4-dihydroxy-2-naphthoate biosynthesis; 1,4-dihydroxy-2-naphthoate from chorismate: step 2/7. The protein operates within quinol/quinone metabolism; menaquinone biosynthesis. Its function is as follows. Catalyzes the thiamine diphosphate-dependent decarboxylation of 2-oxoglutarate and the subsequent addition of the resulting succinic semialdehyde-thiamine pyrophosphate anion to isochorismate to yield 2-succinyl-5-enolpyruvyl-6-hydroxy-3-cyclohexene-1-carboxylate (SEPHCHC). The polypeptide is 2-succinyl-5-enolpyruvyl-6-hydroxy-3-cyclohexene-1-carboxylate synthase (Halobacterium salinarum (strain ATCC 29341 / DSM 671 / R1)).